A 345-amino-acid polypeptide reads, in one-letter code: Anthranilate phosphoribosyltransferase (345 aa).

5-phospho-alpha-D-ribose 1-diphosphate is bound by residues Gly75, 78–79 (GD), Ser83, 85–88 (NIST), 103–111 (KHGNRAASS), and Gly115. Gly75 lines the anthranilate pocket. Ser87 provides a ligand contact to Mg(2+). Asn106 contacts anthranilate. Position 161 (Arg161) interacts with anthranilate. Residues Asp219 and Glu220 each contribute to the Mg(2+) site.

The protein belongs to the anthranilate phosphoribosyltransferase family. As to quaternary structure, homodimer. Mg(2+) is required as a cofactor.

The catalysed reaction is N-(5-phospho-beta-D-ribosyl)anthranilate + diphosphate = 5-phospho-alpha-D-ribose 1-diphosphate + anthranilate. The protein operates within amino-acid biosynthesis; L-tryptophan biosynthesis; L-tryptophan from chorismate: step 2/5. Functionally, catalyzes the transfer of the phosphoribosyl group of 5-phosphorylribose-1-pyrophosphate (PRPP) to anthranilate to yield N-(5'-phosphoribosyl)-anthranilate (PRA). The protein is Anthranilate phosphoribosyltransferase of Nocardia farcinica (strain IFM 10152).